Reading from the N-terminus, the 545-residue chain is Glucans biosynthesis protein G (545 aa).

The signal sequence occupies residues 1–34 (MVSLLRCQSFKPSSSLICSLALSAAFALSSSAFA). The segment at 38–60 (KPAENKPATPVVSPPKATAQPAN) is disordered.

Belongs to the OpgD/OpgG family.

It is found in the periplasm. It functions in the pathway glycan metabolism; osmoregulated periplasmic glucan (OPG) biosynthesis. Its function is as follows. Involved in the biosynthesis of osmoregulated periplasmic glucans (OPGs). The chain is Glucans biosynthesis protein G from Shewanella sp. (strain MR-7).